We begin with the raw amino-acid sequence, 364 residues long: Dihydroorotate dehydrogenase (quinone) (364 aa).

Residues 61-65 and Ser85 each bind FMN; that span reads AGFDK. Lys65 contacts substrate. 110–114 is a substrate binding site; it reads NRMGF. Positions 139 and 170 each coordinate FMN. Asn170 is a substrate binding site. Catalysis depends on Ser173, which acts as the Nucleophile. Asn175 is a substrate binding site. The FMN site is built by Lys214 and Ser242. 243–244 provides a ligand contact to substrate; sequence NT. FMN is bound by residues Gly266, Gly295, and 316–317; that span reads YS.

Belongs to the dihydroorotate dehydrogenase family. Type 2 subfamily. In terms of assembly, monomer. FMN serves as cofactor.

The protein localises to the cell membrane. It catalyses the reaction (S)-dihydroorotate + a quinone = orotate + a quinol. The protein operates within pyrimidine metabolism; UMP biosynthesis via de novo pathway; orotate from (S)-dihydroorotate (quinone route): step 1/1. Catalyzes the conversion of dihydroorotate to orotate with quinone as electron acceptor. In Bradyrhizobium sp. (strain ORS 278), this protein is Dihydroorotate dehydrogenase (quinone).